We begin with the raw amino-acid sequence, 218 residues long: DNA-binding protein HU 2 (218 aa).

Positions M1–S91 are bacterial histone-like domain. Residues V101–K218 are disordered. The interval K118–K218 is degenerate repeats region. Positions K127 to T161 are enriched in low complexity. The segment covering T162–A172 has biased composition (basic residues). Over residues A173–K182 the composition is skewed to low complexity. Over residues T183–K218 the composition is skewed to basic residues.

The protein belongs to the bacterial histone-like protein family. Long actinobacterial subfamily. In terms of assembly, homodimer.

The protein localises to the cytoplasm. It localises to the nucleoid. In terms of biological role, histone-like DNA-binding protein which is capable of wrapping DNA to stabilize it, and thus to prevent its denaturation under extreme environmental conditions. The protein is DNA-binding protein HU 2 (hup2) of Streptomyces coelicolor (strain ATCC BAA-471 / A3(2) / M145).